A 496-amino-acid chain; its full sequence is Cyclin-L1 (496 aa).

Cyclin-like regions lie at residues 68–170 (ELIQ…RILK) and 183–267 (KIIV…TTLR). The disordered stretch occupies residues 301-496 (NPDGTPAILS…SHSGHGRHRR (196 aa)). The span at 322–347 (SPRDVKTEEKSPNFAKVKREMDDKQS) shows a compositional bias: basic and acidic residues. 4 stretches are compositionally biased toward basic residues: residues 358–392 (ENKRSRSVSRSRSRTKSRSRSHSPRRHYNNRRRSR), 412–426 (RRHHNHGSPHMKLKH), 434–446 (RHAHKRKKSHSPS), and 456–468 (KKHRHEHGHHRER). The interval 363 to 406 (RSVSRSRSRTKSRSRSHSPRRHYNNRRRSRSGTYSSRSRSRSRS) is RS. Basic and acidic residues predominate over residues 469-478 (RERSRSFERS). Positions 479 to 496 (HKNKHHGSSHSGHGRHRR) are enriched in basic residues.

It belongs to the cyclin family. Cyclin L subfamily.

It localises to the nucleus speckle. Its subcellular location is the nucleus. It is found in the nucleoplasm. In terms of biological role, involved in pre-mRNA splicing. In Xenopus laevis (African clawed frog), this protein is Cyclin-L1 (ccnl1).